The chain runs to 127 residues: DNA-directed RNA polymerase subunit omega (127 aa).

Belongs to the RNA polymerase subunit omega family. As to quaternary structure, the RNAP catalytic core consists of 2 alpha, 1 beta, 1 beta' and 1 omega subunit. When a sigma factor is associated with the core the holoenzyme is formed, which can initiate transcription.

It catalyses the reaction RNA(n) + a ribonucleoside 5'-triphosphate = RNA(n+1) + diphosphate. Functionally, promotes RNA polymerase assembly. Latches the N- and C-terminal regions of the beta' subunit thereby facilitating its interaction with the beta and alpha subunits. The sequence is that of DNA-directed RNA polymerase subunit omega from Rickettsia africae (strain ESF-5).